The following is a 246-amino-acid chain: MLVVLLTAALLALSSAQGTDEEVNNAETSDVPADSEQQPVDSGSDPPSADADAENVQEGESAAPANEEPPATSGSEEEQQQQEPTQAENQEPPATSGSEEEQQQQEPTQAENQEPPATSGSEEEQQQQEPTQAEDQQPPATSGSEEEQQQQESTQAENQEPSDSAGEGQETQPEEGNVESPPSSPENSQEQPQQTNPEEKPPAPKTQEEPQHDSGRPKKPLLPFIANLIRERIRKLLARSPLGRRF.

An N-terminal signal peptide occupies residues 1 to 18; sequence MLVVLLTAALLALSSAQG. The interval 14–223 is disordered; that stretch reads SSAQGTDEEV…SGRPKKPLLP (210 aa). 7 stretches are compositionally biased toward low complexity: residues 39–50, 58–71, 81–93, 104–116, 127–141, 150–159, and 178–196; these read PVDSGSDPPSAD, EGES…EPPA, QQEP…QEPP, QQEP…PPAT, QQESTQAENQ, and VESP…QQTN. A run of 5 repeats spans residues 67-89, 90-112, 113-135, 136-158, and 159-181. Positions 67 to 181 are 5 X 23 AA tandem repeats; the sequence is EEPPATSGSE…QPEEGNVESP (115 aa). The segment covering 197–216 has biased composition (basic and acidic residues); the sequence is PEEKPPAPKTQEEPQHDSGR.

In terms of tissue distribution, submandibular gland acinar cells.

The protein resides in the secreted. GRP proteins have a marked affinity for hydroxyapatite. They may play a role in the formation of the protective acquired pellicle at the saliva-tooth interface. The chain is Submandibular gland secretory Glx-rich protein CA (Grpca) from Rattus norvegicus (Rat).